Consider the following 950-residue polypeptide: Zinc finger CCCH domain-containing protein 3 (950 aa).

4 disordered regions span residues 32-106, 127-182, 201-220, and 314-489; these read GNSS…HPEP, IKPP…TKVG, VVKSVGRVSDSSPEHRRTVS, and SEKS…VLRK. Residues 56–74 are compositionally biased toward basic residues; sequence RPSRRGFSSHHGPSWRKKY. Polar residues predominate over residues 76 to 96; it reads LVNQPVESSDPASDPAFQTSL. The span at 327–338 shows a compositional bias: polar residues; that stretch reads PRTTLESGNKAT. The segment covering 344-360 has biased composition (basic and acidic residues); the sequence is KTEKPQPKVDPEVRPEK. The segment covering 370–388 has biased composition (low complexity); the sequence is SPSKYKWKASSPSASSSSS. Over residues 402–412 the composition is skewed to polar residues; sequence SQLSPVPSRPT. Ser-405 carries the phosphoserine modification. Positions 438–449 are enriched in basic residues; it reads VKSRTKIIRRRG. Residues 460–470 are compositionally biased toward polar residues; it reads SPTTATTSKNH. 5 C3H1-type zinc fingers span residues 662 to 690, 694 to 717, 718 to 744, 745 to 772, and 773 to 795; these read EKKREYCMYYNRFGRCNRGECCPYIHDPE, VCTRFVRGTCKKTDGSCPFSHHVS, KEKMPVCSYFLKGICSNSNCPYSHVYV, SRKAEVCSDFLKGYCPLGAKCKKKHTLL, and CPDFARRGICPRGSQCQLLHRNQ. The tract at residues 793–950 is disordered; it reads RNQKRHGRRT…GKPLHIKPRL (158 aa). A compositionally biased stretch (polar residues) spans 828 to 838; sequence PTTTQRSVRQM. The span at 839–849 shows a compositional bias: low complexity; it reads SSGLASGAEAP. Residues Ser-851 and Ser-855 each carry the phosphoserine modification. Positions 857–888 are enriched in low complexity; it reads RVLASTSTLSSKATAASSPSPSPSTSSPAPSL. Positions 914-928 are enriched in polar residues; that stretch reads SLHSSPSPGGQTETG. Phosphoserine occurs at positions 918, 920, and 934.

In terms of assembly, interacts with SMAD1, SMAD3, SMAD4, CPSF2 and CPSF3.

It localises to the nucleus. Functionally, required for the export of polyadenylated mRNAs from the nucleus. Enhances ACVR1B-induced SMAD-dependent transcription. Binds to single-stranded DNA but not to double-stranded DNA in vitro. Involved in RNA cleavage. This chain is Zinc finger CCCH domain-containing protein 3 (Zc3h3), found in Mus musculus (Mouse).